The primary structure comprises 622 residues: Membrane protein insertase YidC (622 aa).

Residues 8 to 28 (LFLALILSMGIWMGVNYFFFP) form a helical membrane-spanning segment. The span at 33-61 (KTSETKEVKVDKPSDDKQDQIQKEKKESR) shows a compositional bias: basic and acidic residues. Residues 33–70 (KTSETKEVKVDKPSDDKQDQIQKEKKESRTTIPSKGTK) are disordered. 4 helical membrane-spanning segments follow: residues 413–433 (FTIP…KLVF), 484–504 (VGGC…YTAF), 532–552 (AIPY…LMVG), and 571–591 (MLMY…PSGV).

Belongs to the OXA1/ALB3/YidC family. Type 1 subfamily. As to quaternary structure, interacts with the Sec translocase complex via SecD. Specifically interacts with transmembrane segments of nascent integral membrane proteins during membrane integration.

It localises to the cell inner membrane. Functionally, required for the insertion and/or proper folding and/or complex formation of integral membrane proteins into the membrane. Involved in integration of membrane proteins that insert both dependently and independently of the Sec translocase complex, as well as at least some lipoproteins. Aids folding of multispanning membrane proteins. The polypeptide is Membrane protein insertase YidC (Leptospira borgpetersenii serovar Hardjo-bovis (strain JB197)).